Reading from the N-terminus, the 658-residue chain is tRNA 5-methylaminomethyl-2-thiouridine biosynthesis bifunctional protein MnmC (658 aa).

The tract at residues 1–236 is tRNA (mnm(5)s(2)U34)-methyltransferase; that stretch reads MIPELPHAQL…KWEVLRGEFL (236 aa). Residues 265 to 658 are FAD-dependent cmnm(5)s(2)U34 oxidoreductase; the sequence is IGGGLAGCAS…ALRRLIRGKA (394 aa).

This sequence in the N-terminal section; belongs to the methyltransferase superfamily. tRNA (mnm(5)s(2)U34)-methyltransferase family. In the C-terminal section; belongs to the DAO family. Requires FAD as cofactor.

It is found in the cytoplasm. It catalyses the reaction 5-aminomethyl-2-thiouridine(34) in tRNA + S-adenosyl-L-methionine = 5-methylaminomethyl-2-thiouridine(34) in tRNA + S-adenosyl-L-homocysteine + H(+). Its function is as follows. Catalyzes the last two steps in the biosynthesis of 5-methylaminomethyl-2-thiouridine (mnm(5)s(2)U) at the wobble position (U34) in tRNA. Catalyzes the FAD-dependent demodification of cmnm(5)s(2)U34 to nm(5)s(2)U34, followed by the transfer of a methyl group from S-adenosyl-L-methionine to nm(5)s(2)U34, to form mnm(5)s(2)U34. In Pseudomonas fluorescens (strain ATCC BAA-477 / NRRL B-23932 / Pf-5), this protein is tRNA 5-methylaminomethyl-2-thiouridine biosynthesis bifunctional protein MnmC.